We begin with the raw amino-acid sequence, 329 residues long: MLEDYYQLDNSYYQRGVEDNLYAAKWGMVIEFLNLNDPNLKPVEGVNFALIGFKSDKGVYINHGRVGAVEGPQSIRTQLAKLPWHLGRNVHVFDVGDIDGPNRSLEQLQSSLAKAVKRLRELNLRPIVLGGGHETAYGNYLGLKSSLKPEQELAVINMDAHFDLRPYDQTGPNSGTGFRQMFDETLAQKQVFNYLILGIQEHNNNLFLFDFVAKSKAIQFLTGLDIYQMGHKEVCKVVDAFLADKEQVYLTIDIDCFAAGAAPGVSAIQSLGVDPNLAVLVFQHIAASGKLIGFDVVEVSPPHDIDNHTANLAASFIFYLTQVWAQIHD.

The Mn(2+) site is built by histidine 133, aspartate 159, histidine 161, aspartate 163, aspartate 253, and aspartate 255.

Belongs to the arginase family. Mn(2+) serves as cofactor.

The catalysed reaction is N-formimidoyl-L-glutamate + H2O = formamide + L-glutamate. It participates in amino-acid degradation; L-histidine degradation into L-glutamate; L-glutamate from N-formimidoyl-L-glutamate (hydrolase route): step 1/1. Catalyzes the conversion of N-formimidoyl-L-glutamate to L-glutamate and formamide. The chain is Formimidoylglutamase from Streptococcus gordonii (strain Challis / ATCC 35105 / BCRC 15272 / CH1 / DL1 / V288).